A 381-amino-acid chain; its full sequence is 1-deoxy-D-xylulose 5-phosphate reductoisomerase (381 aa).

Positions 13, 14, 15, 40, and 114 each coordinate NADPH. Lysine 115 is a binding site for 1-deoxy-D-xylulose 5-phosphate. Residue glutamate 116 coordinates NADPH. Position 140 (aspartate 140) interacts with Mn(2+). 1-deoxy-D-xylulose 5-phosphate contacts are provided by serine 141, glutamate 142, serine 166, and histidine 189. Glutamate 142 contacts Mn(2+). Glycine 195 is a binding site for NADPH. 1-deoxy-D-xylulose 5-phosphate-binding residues include serine 202, asparagine 207, lysine 208, and glutamate 211. Glutamate 211 serves as a coordination point for Mn(2+).

The protein belongs to the DXR family. It depends on Mg(2+) as a cofactor. Mn(2+) serves as cofactor.

It carries out the reaction 2-C-methyl-D-erythritol 4-phosphate + NADP(+) = 1-deoxy-D-xylulose 5-phosphate + NADPH + H(+). It functions in the pathway isoprenoid biosynthesis; isopentenyl diphosphate biosynthesis via DXP pathway; isopentenyl diphosphate from 1-deoxy-D-xylulose 5-phosphate: step 1/6. In terms of biological role, catalyzes the NADPH-dependent rearrangement and reduction of 1-deoxy-D-xylulose-5-phosphate (DXP) to 2-C-methyl-D-erythritol 4-phosphate (MEP). The polypeptide is 1-deoxy-D-xylulose 5-phosphate reductoisomerase (Treponema denticola (strain ATCC 35405 / DSM 14222 / CIP 103919 / JCM 8153 / KCTC 15104)).